The sequence spans 142 residues: Large ribosomal subunit protein uL13 (142 aa).

Belongs to the universal ribosomal protein uL13 family. Part of the 50S ribosomal subunit.

Functionally, this protein is one of the early assembly proteins of the 50S ribosomal subunit, although it is not seen to bind rRNA by itself. It is important during the early stages of 50S assembly. The protein is Large ribosomal subunit protein uL13 of Klebsiella pneumoniae (strain 342).